The primary structure comprises 595 residues: MNGLIKHKLELLPSNPGCYLHKDKFGNIIYVGKAKNLKNRVRSYFRGSHDTKTELLVSEIADFEFIVTESNIEALLLEINLIQENMPKFNIRLKDGKSYPFIKITKELYPRLLITRQVKKDGGLYFGPYPDSGAANEIKKLLDRIFPFKKCKNPANKVCFYYHIGQCNAHTICHTTEDYWQGLVEDVKNFLNGHDDKIVNQLKAKMKDMSDQMAFERAAEYRDLIEAVSTLRTKQRVIRQDMQDRDIFGYYVDKGWMCVQVFFVRQGKLIQRDVNMFPYYNDAEEDFLTYMGQFYLDSRHLKPKEIFIPGDIDQESVEALVGDEVKVFKPKRGEKKQLVNLATKNARVSLTQKFDLLEKDIAKTQGAIENLGKLMGIPTPVRIESFDNSNIMGTSPVSAMVVFENGKPNKKEYRKYKIKTVEGPDDYASMREVIRRRYSRVKRDGLTPPDLIIMDGGQGQVNVAKDVLRNELNLSIPVAGLQKNDKHQTNELLFGDPLRVIDLPRQSEEFFLLHRIQDEVHRFAITFHRQVRSKNSFSSKLDGVEGLGPKRKQKLLKNFKSMTAIQQASVEDIQALGIPKKVAQALLDKLSQDSH.

A GIY-YIG domain is found at S14 to I91. One can recognise a UVR domain in the interval D196 to L231.

The protein belongs to the UvrC family. Interacts with UvrB in an incision complex.

It localises to the cytoplasm. The UvrABC repair system catalyzes the recognition and processing of DNA lesions. UvrC both incises the 5' and 3' sides of the lesion. The N-terminal half is responsible for the 3' incision and the C-terminal half is responsible for the 5' incision. This is UvrABC system protein C from Streptococcus thermophilus (strain ATCC BAA-491 / LMD-9).